The chain runs to 342 residues: tRNA N6-adenosine threonylcarbamoyltransferase (342 aa).

2 residues coordinate Fe cation: His112 and His116. Substrate contacts are provided by residues 134–138 (IVSGG), Asp167, Gly180, and Asn278. A Fe cation-binding site is contributed by Asp306.

It belongs to the KAE1 / TsaD family. Fe(2+) serves as cofactor.

It is found in the cytoplasm. The catalysed reaction is L-threonylcarbamoyladenylate + adenosine(37) in tRNA = N(6)-L-threonylcarbamoyladenosine(37) in tRNA + AMP + H(+). In terms of biological role, required for the formation of a threonylcarbamoyl group on adenosine at position 37 (t(6)A37) in tRNAs that read codons beginning with adenine. Is involved in the transfer of the threonylcarbamoyl moiety of threonylcarbamoyl-AMP (TC-AMP) to the N6 group of A37, together with TsaE and TsaB. TsaD likely plays a direct catalytic role in this reaction. The protein is tRNA N6-adenosine threonylcarbamoyltransferase of Anaplasma phagocytophilum (strain HZ).